The chain runs to 333 residues: Ferrochelatase (333 aa).

Fe cation is bound by residues His202 and Glu284.

The protein belongs to the ferrochelatase family.

The protein resides in the cytoplasm. It catalyses the reaction heme b + 2 H(+) = protoporphyrin IX + Fe(2+). It participates in porphyrin-containing compound metabolism; protoheme biosynthesis; protoheme from protoporphyrin-IX: step 1/1. Catalyzes the ferrous insertion into protoporphyrin IX. This Francisella tularensis subsp. holarctica (strain LVS) protein is Ferrochelatase.